The primary structure comprises 162 residues: MNLNELRDNAGSRYRKKRLGRGIGSGKGKTSGKGVKGQKAREGVSLNGFEGGQLPLYRRLPKRGFKNIFRKEYAPVNLGALDKAIADGKIDAGTVVTEDVLRTAGLVGSGKFAGVRLLAKGELARAVTIEVSGASATAVAAVEKAGGSVRTKAARDEAQAPA.

Residues 1 to 10 show a composition bias toward basic and acidic residues; sequence MNLNELRDNA. The segment at 1 to 39 is disordered; that stretch reads MNLNELRDNAGSRYRKKRLGRGIGSGKGKTSGKGVKGQK. Residues 21 to 35 are compositionally biased toward gly residues; sequence RGIGSGKGKTSGKGV.

It belongs to the universal ribosomal protein uL15 family. In terms of assembly, part of the 50S ribosomal subunit.

In terms of biological role, binds to the 23S rRNA. The polypeptide is Large ribosomal subunit protein uL15 (Gluconacetobacter diazotrophicus (strain ATCC 49037 / DSM 5601 / CCUG 37298 / CIP 103539 / LMG 7603 / PAl5)).